We begin with the raw amino-acid sequence, 314 residues long: DNA-directed RNA polymerase subunit alpha (314 aa).

The interval 1–228 is alpha N-terminal domain (alpha-NTD); it reads MIEIEKPKIE…EHLNIFVGLT (228 aa). Residues 245-314 are alpha C-terminal domain (alpha-CTD); it reads KEKVLEMTIE…ELGLGLRKDD (70 aa).

Belongs to the RNA polymerase alpha chain family. Homodimer. The RNAP catalytic core consists of 2 alpha, 1 beta, 1 beta' and 1 omega subunit. When a sigma factor is associated with the core the holoenzyme is formed, which can initiate transcription.

The enzyme catalyses RNA(n) + a ribonucleoside 5'-triphosphate = RNA(n+1) + diphosphate. Functionally, DNA-dependent RNA polymerase catalyzes the transcription of DNA into RNA using the four ribonucleoside triphosphates as substrates. The chain is DNA-directed RNA polymerase subunit alpha from Bacillus licheniformis (strain ATCC 14580 / DSM 13 / JCM 2505 / CCUG 7422 / NBRC 12200 / NCIMB 9375 / NCTC 10341 / NRRL NRS-1264 / Gibson 46).